Here is a 169-residue protein sequence, read N- to C-terminus: Secreted LysM effector Blys5 (169 aa).

Positions 1 to 19 (MKLSVISAVFVSLAAAAAA) are cleaved as a signal peptide. 2 consecutive LysM domains span residues 47 to 94 (TYYQ…YYCV) and 121 to 167 (QWYK…NVCV).

The protein belongs to the secreted LysM effector family.

Its function is as follows. Secreted effector that enables the plant pathogenic fungus to manipulate host defenses for successful infection. Required for the full virulence to infect insect hosts. Protects fungal hyphae against the hydrolytic activity of chitinase and plays an important role in evasion of insect immunities. Binds chitin and can additionally bind chitosan and cellulose. Coats and protects the cell walls of insect pathogens from host cell recognition and additionally shields fungal cells from the hydrolysis of insect chitinases. This Beauveria bassiana (strain ARSEF 2860) (White muscardine disease fungus) protein is Secreted LysM effector Blys5.